Reading from the N-terminus, the 308-residue chain is KH domain-containing protein At4g26480 (308 aa).

Positions 1–26 (MMMMTSLGGGAGGGGGGGGSGGGRFV) are disordered. A compositionally biased stretch (gly residues) spans 7 to 24 (LGGGAGGGGGGGGSGGGR). The region spanning 165 to 232 (DIPVDKYPNY…EHLNEPLHIL (68 aa)) is the KH domain. Residues 284–308 (EEGSPMSGSISPYNSLGMKRAKTRG) are disordered. Ser294 is subject to Phosphoserine.

The protein resides in the nucleus. The chain is KH domain-containing protein At4g26480 from Arabidopsis thaliana (Mouse-ear cress).